Here is a 363-residue protein sequence, read N- to C-terminus: DNA replication and repair protein RecF (363 aa).

30–37 contacts ATP; it reads GDNAQGKT.

Belongs to the RecF family.

It localises to the cytoplasm. Functionally, the RecF protein is involved in DNA metabolism; it is required for DNA replication and normal SOS inducibility. RecF binds preferentially to single-stranded, linear DNA. It also seems to bind ATP. The polypeptide is DNA replication and repair protein RecF (Lachnospira eligens (strain ATCC 27750 / DSM 3376 / VPI C15-48 / C15-B4) (Eubacterium eligens)).